A 1582-amino-acid polypeptide reads, in one-letter code: ATP-binding cassette sub-family C member 8 (1582 aa).

The Extracellular portion of the chain corresponds to 1–30 (MPLAFCGTENHSAAYRVDQGVLNNGCFVDA). Cysteines 6 and 26 form a disulfide. Asparagine 10 is a glycosylation site (N-linked (GlcNAc...) asparagine). The helical transmembrane segment at 31 to 47 (LNVVPHVFLLFITFPIL) threads the bilayer. Topologically, residues 48-72 (FIGWGSQSSKVHIHHSTWLHFPGHN) are cytoplasmic. Residues 73 to 89 (LRWILTFILLFVLVCEI) traverse the membrane as a helical segment. Residues 90-106 (AEGILSDGVTESRHLHL) lie on the Extracellular side of the membrane. A helical transmembrane segment spans residues 107 to 123 (YMPAGMAFMAAITSVVY). Topologically, residues 124-136 (YHNIETSNFPKLL) are cytoplasmic. The helical transmembrane segment at 137 to 153 (IALLIYWTLAFITKTIK) threads the bilayer. Topologically, residues 154-169 (FVKFYDHAIGFSQLRF) are extracellular. A helical membrane pass occupies residues 170–186 (CLTGLLVILYGMLLLVE). The Cytoplasmic segment spans residues 187–303 (VNVIRVRRYV…AFGRRLVLSS (117 aa)). Residues 299–602 (LVLSSTFRIL…LSSVVRSTVK (304 aa)) form the ABC transmembrane type-1 1 domain. A helical transmembrane segment spans residues 304–319 (TFRILADLLGFAGPLC). Topologically, residues 320–356 (IFGIVDHLGKENHVFQPKTQFLGVYFVSSQEFLGNAY) are extracellular. The chain crosses the membrane as a helical span at residues 357–372 (VLAVLLFLALLLQRTF). At 373-438 (LQASYYVAIE…MWFFFLCPNL (66 aa)) the chain is on the cytoplasmic side. A helical membrane pass occupies residues 439-454 (WAMPVQIIVGVILLYY). The Extracellular portion of the chain corresponds to 455–460 (ILGVSA). A helical membrane pass occupies residues 461–473 (LIGAAVIILLAPV). Topologically, residues 474-541 (QYFVATKLSQ…SLRAFAVYTS (68 aa)) are cytoplasmic. Residues 542–557 (ISIFMNTAIPIAAVLI) traverse the membrane as a helical segment. Topologically, residues 558 to 576 (TFVGHVSFFKESDFSPSVA) are extracellular. Residues 577 to 592 (FASLSLFHILVTPLFL) form a helical membrane-spanning segment. At 593 to 1013 (LSSVVRSTVK…YLSSAGILLL (421 aa)) the chain is on the cytoplasmic side. The ABC transporter 1 domain maps to 679–930 (VQIIGGFFTW…ECQLFEHWKT (252 aa)). 4 residues coordinate ATP: tryptophan 688, glycine 716, serine 720, and serine 721. Serine 720 is a Mg(2+) binding site. The interval 741-768 (SSLPDSEGEDPSNPERETAADSDARSRG) is disordered. Residues 753–766 (NPERETAADSDARS) are compositionally biased toward basic and acidic residues. Residue glutamine 775 coordinates Mg(2+). Positions 939–950 (LEKETVMERKAP) are enriched in basic and acidic residues. The tract at residues 939–962 (LEKETVMERKAPEPSQGLPRAMSS) is disordered. Residues 1013-1307 (LSLLVFSQLL…MVRNLADMEI (295 aa)) enclose the ABC transmembrane type-1 2 domain. The helical transmembrane segment at 1014 to 1031 (SLLVFSQLLKHMVLVAID) threads the bilayer. Residues 1032 to 1067 (YWLAKWTDSALVLSPAARNCSLSQECALDQSVYAMV) are Extracellular-facing. The N-linked (GlcNAc...) asparagine glycan is linked to asparagine 1050. A helical transmembrane segment spans residues 1068–1084 (FTVLCSLGIALCLVTSV). Over 1085 to 1143 (TVEWTGLKVAKRLHRSLLNRIILAPMRFFETTPLGSILNRFSSDCNTIDQHIPSTLECL) the chain is Cytoplasmic. The helical transmembrane segment at 1144–1161 (SRSTLLCVSALAVISYVT) threads the bilayer. Position 1162 (proline 1162) is a topological domain, extracellular. Residues 1163 to 1175 (VFLVALLPLAVVC) form a helical membrane-spanning segment. Residues 1176 to 1249 (YFIQKYFRVA…FLTAANRWLE (74 aa)) lie on the Cytoplasmic side of the membrane. Residues 1250-1265 (VRMEYIGACVVLIAAA) form a helical membrane-spanning segment. The Extracellular portion of the chain corresponds to 1266 to 1281 (TSISNSLHRELSAGLV). The helical transmembrane segment at 1282–1297 (GLGLTYALMVSNYLNW) threads the bilayer. Over 1298–1582 (MVRNLADMEI…VFASFVRADK (285 aa)) the chain is Cytoplasmic. An ABC transporter 2 domain is found at 1345–1579 (IQIQNLSVRY…KDSVFASFVR (235 aa)). 6 residues coordinate ADP: threonine 1381, glycine 1382, glycine 1384, lysine 1385, serine 1386, and serine 1387. Residue serine 1483 participates in ATP binding.

The protein belongs to the ABC transporter superfamily. ABCC family. Conjugate transporter (TC 3.A.1.208) subfamily. In terms of assembly, forms an heterooctamer with KCNJ11; four ABCC8/SUR1 molecules interact with one KCNJ11 homotetramer.

Its subcellular location is the cell membrane. KATP channels are regulated by cytoplasmic ATP/ADP ratios; ATP inhibits the channel by closing the pore, while ADP activates the channel. Activated by phosphatidylinositol 4,5-biphosphate (PtdIns(4,5)P2). Its function is as follows. Regulator subunit of pancreatic ATP-sensitive potassium channel (KATP), playing a major role in the regulation of insulin release. In pancreatic cells, it forms KATP channels with KCNJ11; KCNJ11 forms the channel pore while ABCC8 is required for activation and regulation. The chain is ATP-binding cassette sub-family C member 8 (Abcc8) from Rattus norvegicus (Rat).